A 228-amino-acid polypeptide reads, in one-letter code: PKHD-type hydroxylase Vapar_1809 (228 aa).

Positions 78 to 179 constitute a Fe2OG dioxygenase domain; sequence QISPPLFNRY…RTASYFWIQS (102 aa). Fe cation contacts are provided by His-97, Asp-99, and His-160. Arg-170 lines the 2-oxoglutarate pocket.

Requires Fe(2+) as cofactor. L-ascorbate serves as cofactor.

In Variovorax paradoxus (strain S110), this protein is PKHD-type hydroxylase Vapar_1809.